Here is a 304-residue protein sequence, read N- to C-terminus: MARASSRNSSEEAWGSLQAPQQQQSPAASSLEGAIWRRAGTQTRALDTILYHPQQSHLLRELCPGVNTQPYLCETGHCCGETGCCTYYYELWWFWLLWTVLILFSCCCAFRHRRAKLRLQQQQRQREINLLAYHGACHGAGPVPTGSLLDLRLLSAFKPPAYEDVVHHPGTPPPPYTVGPGYPWTTSSECTRCSSESSCSAHLEGTNVEGVSSQQSALPHQEGEPRAGLSPVHIPPSCRYRRLTGDSGIELCPCPDSSEGEPLKEARASASQPDLEDHSPCALPPDSVSQVPPMGLASSCGDIP.

Residues 1-26 form a disordered region; sequence MARASSRNSSEEAWGSLQAPQQQQSP. 2 short sequence motifs (PPxY motif) span residues 159-162 and 172-176; these read PPAY and PPPPY. Disordered regions lie at residues 206–235 and 252–304; these read TNVE…VHIP and CPCP…GDIP. Positions 209-218 are enriched in polar residues; the sequence is EGVSSQQSAL.

Binds to the WW domain of YAP1, WWP1 and WWP2. Interacts with WWOX. Interacts with NEDD4.

The polypeptide is WW domain-binding protein 1 (Wbp1) (Mus musculus (Mouse)).